An 87-amino-acid chain; its full sequence is Small ribosomal subunit protein bS20 (87 aa).

The protein belongs to the bacterial ribosomal protein bS20 family.

Its function is as follows. Binds directly to 16S ribosomal RNA. In Corynebacterium diphtheriae (strain ATCC 700971 / NCTC 13129 / Biotype gravis), this protein is Small ribosomal subunit protein bS20.